Consider the following 172-residue polypeptide: Signal peptidase complex catalytic subunit SEC11 (172 aa).

Over 1–14 (MLSSLANPRQAASQ) the chain is Cytoplasmic. A helical; Signal-anchor for type II membrane protein membrane pass occupies residues 15 to 35 (LLNFALILSTAFMMWKGLSVV). At 36–172 (SDSPSPIVVV…MGLVVVLQRE (137 aa)) the chain is on the lumenal side. Active-site charge relay system residues include serine 49, histidine 90, and aspartate 115. Positions 158–169 (AMLGIMGLVVVL) are C-terminal short (CTS) helix.

Belongs to the peptidase S26B family. Component of the signal peptidase complex (SPC) composed of a catalytic subunit SEC11 and three accessory subunits SPC1, SPC2 and SPC3. The complex induces a local thinning of the ER membrane which is used to measure the length of the signal peptide (SP) h-region of protein substrates. This ensures the selectivity of the complex towards h-regions shorter than 18-20 amino acids. SPC associates with the translocon complex.

The protein resides in the endoplasmic reticulum membrane. It carries out the reaction Cleavage of hydrophobic, N-terminal signal or leader sequences from secreted and periplasmic proteins.. In terms of biological role, catalytic component of the signal peptidase complex (SPC) which catalyzes the cleavage of N-terminal signal sequences from nascent proteins as they are translocated into the lumen of the endoplasmic reticulum. Specifically cleaves N-terminal signal peptides that contain a hydrophobic alpha-helix (h-region) shorter than 18-20 amino acids. The sequence is that of Signal peptidase complex catalytic subunit SEC11 (SEC11) from Colletotrichum graminicola (strain M1.001 / M2 / FGSC 10212) (Maize anthracnose fungus).